Reading from the N-terminus, the 357-residue chain is NAD-dependent protein deacetylase HST2 (357 aa).

Residue serine 2 is modified to N-acetylserine. One can recognise a Deacetylase sirtuin-type domain in the interval 5 to 284 (TASTEMSVRK…EQLVEELGWQ (280 aa)). NAD(+) contacts are provided by residues 32-52 (GAGI…TGLY) and 115-118 (QNID). The active-site Proton acceptor is the histidine 135. Cysteine 143, cysteine 146, cysteine 170, and cysteine 173 together coordinate Zn(2+). Residues 223–225 (GTS), 248–250 (NLE), and serine 270 contribute to the NAD(+) site. Positions 317–329 (LDQSEHESADKKD) are enriched in basic and acidic residues. A disordered region spans residues 317 to 357 (LDQSEHESADKKDKKLQRLNGHDSDEDGASNSSSSQKAAKE). Serine 340 bears the Phosphoserine mark.

This sequence belongs to the sirtuin family. Class I subfamily. In terms of assembly, homotrimer. Monomer. Homotrimeric in its unliganded state. Undergoes a trimer-monomer transition upon acetyl-lysine substrate binding. Requires Zn(2+) as cofactor.

Its subcellular location is the cytoplasm. It is found in the nucleus. It catalyses the reaction N(6)-acetyl-L-lysyl-[protein] + NAD(+) + H2O = 2''-O-acetyl-ADP-D-ribose + nicotinamide + L-lysyl-[protein]. With respect to regulation, inhibited by ADP-ribose and nicotinamide. Its function is as follows. NAD-dependent histone deacetylase that is involved in nuclear silencing events. Derepresses subtelomeric silencing and increases repression in nucleolar (rDNA) silencing. Its function is negatively regulated by active nuclear export. In Saccharomyces cerevisiae (strain ATCC 204508 / S288c) (Baker's yeast), this protein is NAD-dependent protein deacetylase HST2 (HST2).